The following is a 241-amino-acid chain: Small ribosomal subunit protein uS2 (241 aa).

This sequence belongs to the universal ribosomal protein uS2 family.

The polypeptide is Small ribosomal subunit protein uS2 (Klebsiella pneumoniae subsp. pneumoniae (strain ATCC 700721 / MGH 78578)).